The following is a 311-amino-acid chain: tRNA dimethylallyltransferase (311 aa).

Residue 16 to 23 (GPTASGKS) coordinates ATP. 18–23 (TASGKS) is a binding site for substrate. Positions 41 to 44 (DSMQ) are interaction with substrate tRNA.

Belongs to the IPP transferase family. As to quaternary structure, monomer. It depends on Mg(2+) as a cofactor.

The enzyme catalyses adenosine(37) in tRNA + dimethylallyl diphosphate = N(6)-dimethylallyladenosine(37) in tRNA + diphosphate. In terms of biological role, catalyzes the transfer of a dimethylallyl group onto the adenine at position 37 in tRNAs that read codons beginning with uridine, leading to the formation of N6-(dimethylallyl)adenosine (i(6)A). This Geobacter sulfurreducens (strain ATCC 51573 / DSM 12127 / PCA) protein is tRNA dimethylallyltransferase.